A 238-amino-acid polypeptide reads, in one-letter code: Ciliary microtubule associated protein 1B (238 aa).

The stretch at proline 182–arginine 207 is one STPGR repeat. The segment at glycine 206 to glycine 238 is disordered.

Belongs to the CIMAP family.

Its subcellular location is the cell projection. The protein localises to the cilium. The protein resides in the flagellum. This chain is Ciliary microtubule associated protein 1B (Cimap1b), found in Mus musculus (Mouse).